Reading from the N-terminus, the 114-residue chain is Probable acid stress chaperone HdeA (114 aa).

The first 26 residues, 1-26 (MIKALFNKNTALAAVTILALSGGAMA), serve as a signal peptide directing secretion. The cysteines at positions 46 and 94 are disulfide-linked.

This sequence belongs to the HdeA family.

The protein resides in the periplasm. Its function is as follows. Required for optimal acid stress protection. Exhibits a chaperone-like activity only at low pH by suppressing non-specifically the aggregation of denaturated periplasmic proteins. The chain is Probable acid stress chaperone HdeA from Brucella suis biovar 1 (strain 1330).